The primary structure comprises 196 residues: uncharacterized protein (196 aa).

Positions 1 to 10 (MPGMVPPHVP) are enriched in pro residues. Disordered regions lie at residues 1–118 (MPGM…EGSG) and 176–196 (TEQA…SAPG). Positions 25–45 (PVAPQVPSPGGAPGQGPYPYS) are enriched in low complexity. Polar residues predominate over residues 54 to 69 (LDTSGKNLTEQNSYSN).

This is an uncharacterized protein from Homo sapiens (Human).